The chain runs to 63 residues: MANESNKTVKVRLVRGLRGTQSRHRLSVRALGLNKLNDVRELKDSPQVRGLINKVQYLVQVEE.

Belongs to the universal ribosomal protein uL30 family. As to quaternary structure, part of the 50S ribosomal subunit.

This chain is Large ribosomal subunit protein uL30, found in Stenotrophomonas maltophilia (strain K279a).